Reading from the N-terminus, the 180-residue chain is Ribulose bisphosphate carboxylase small subunit, chloroplastic (180 aa).

Residues 1-56 constitute a chloroplast transit peptide; it reads MASSVLSSAAVATRSNVAQANMVAPFTGLKSAASFPVSRKQNLDITSIASNGGRVQ.

This sequence belongs to the RuBisCO small chain family. Heterohexadecamer of 8 large and 8 small subunits.

It localises to the plastid. The protein localises to the chloroplast. In terms of biological role, ruBisCO catalyzes two reactions: the carboxylation of D-ribulose 1,5-bisphosphate, the primary event in carbon dioxide fixation, as well as the oxidative fragmentation of the pentose substrate. Both reactions occur simultaneously and in competition at the same active site. Although the small subunit is not catalytic it is essential for maximal activity. The chain is Ribulose bisphosphate carboxylase small subunit, chloroplastic from Nicotiana plumbaginifolia (Leadwort-leaved tobacco).